A 286-amino-acid polypeptide reads, in one-letter code: Translocon-associated protein subunit alpha (286 aa).

The first 18 residues, Met-1–Thr-18, serve as a signal peptide directing secretion. Topologically, residues Val-19–Thr-207 are lumenal. The segment covering Glu-39–Gly-75 has biased composition (acidic residues). The disordered stretch occupies residues Glu-39–Ala-83. Asn-136 and Asn-191 each carry an N-linked (GlcNAc...) asparagine glycan. A helical membrane pass occupies residues Ile-208–Leu-228. Topologically, residues Leu-229–Glu-286 are cytoplasmic. Residue Ser-247 is modified to Phosphoserine. Position 260 is a phosphothreonine (Thr-260). Residues Leu-261–Glu-286 are disordered. A Phosphoserine modification is found at Ser-268. Over residues Ser-268 to Lys-279 the composition is skewed to basic residues.

Belongs to the TRAP-alpha family. Heterotetramer of TRAP-alpha, TRAP-beta, TRAP-delta and TRAP-gamma. Interacts with palmitoylated calnexin (CALX), the interaction is required for efficient folding of glycosylated proteins.

The protein resides in the endoplasmic reticulum membrane. In terms of biological role, TRAP proteins are part of a complex whose function is to bind calcium to the ER membrane and thereby regulate the retention of ER resident proteins. May be involved in the recycling of the translocation apparatus after completion of the translocation process or may function as a membrane-bound chaperone facilitating folding of translocated proteins. This chain is Translocon-associated protein subunit alpha (SSR1), found in Homo sapiens (Human).